The chain runs to 213 residues: 3,4-dihydroxy-2-butanone 4-phosphate synthase (213 aa).

D-ribulose 5-phosphate is bound by residues Arg37–Glu38, Asp42, Arg150–Thr154, and Glu174. Mg(2+) is bound at residue Glu38. Position 153 (His153) interacts with Mg(2+).

The protein belongs to the DHBP synthase family. Homodimer. Requires Mg(2+) as cofactor. It depends on Mn(2+) as a cofactor.

It carries out the reaction D-ribulose 5-phosphate = (2S)-2-hydroxy-3-oxobutyl phosphate + formate + H(+). It participates in cofactor biosynthesis; riboflavin biosynthesis; 2-hydroxy-3-oxobutyl phosphate from D-ribulose 5-phosphate: step 1/1. In terms of biological role, catalyzes the conversion of D-ribulose 5-phosphate to formate and 3,4-dihydroxy-2-butanone 4-phosphate. The protein is 3,4-dihydroxy-2-butanone 4-phosphate synthase of Clostridium botulinum (strain Langeland / NCTC 10281 / Type F).